Here is a 47-residue protein sequence, read N- to C-terminus: Large ribosomal subunit protein bL34 (47 aa).

Belongs to the bacterial ribosomal protein bL34 family.

The polypeptide is Large ribosomal subunit protein bL34 (Corynebacterium jeikeium (strain K411)).